Reading from the N-terminus, the 134-residue chain is Small ribosomal subunit protein uS8 (134 aa).

It belongs to the universal ribosomal protein uS8 family. Part of the 30S ribosomal subunit. Contacts proteins S5 and S12.

Functionally, one of the primary rRNA binding proteins, it binds directly to 16S rRNA central domain where it helps coordinate assembly of the platform of the 30S subunit. The chain is Small ribosomal subunit protein uS8 from Petrotoga mobilis (strain DSM 10674 / SJ95).